The sequence spans 62 residues: Sperm protamine P1 (62 aa).

Positions 1 to 62 (MARYRRHSRS…RRYSRRGRRR (62 aa)) are disordered.

This sequence belongs to the protamine P1 family. Testis.

Its subcellular location is the nucleus. It localises to the chromosome. Its function is as follows. Protamines substitute for histones in the chromatin of sperm during the haploid phase of spermatogenesis. They compact sperm DNA into a highly condensed, stable and inactive complex. This Pseudantechinus bilarni (Sandstone dibbler) protein is Sperm protamine P1 (PRM1).